The chain runs to 505 residues: Lysine--tRNA ligase (505 aa).

Positions 415 and 422 each coordinate Mg(2+).

The protein belongs to the class-II aminoacyl-tRNA synthetase family. Homodimer. The cofactor is Mg(2+).

The protein localises to the cytoplasm. The enzyme catalyses tRNA(Lys) + L-lysine + ATP = L-lysyl-tRNA(Lys) + AMP + diphosphate. The protein is Lysine--tRNA ligase of Shigella dysenteriae serotype 1 (strain Sd197).